The chain runs to 197 residues: MAVSPKINRREHILQCLAQMLETSPGQRITTAKLASEVGVSEAALYRHFPSKARMFEGLIEFIEESLLSRINIIMDDEKDTMKRCQLVLQLLLIFAERNPGISRVLNGDALLGENERLRSRISTLFAKIETQLKQILREKTLREGKGFNLDEAILANLLLAFAEGRIAQFVRSEFKLKPTQHFDEQWRFIQHQLLQS.

In terms of domain architecture, HTH tetR-type spans 7-67 (INRREHILQC…GLIEFIEESL (61 aa)). The H-T-H motif DNA-binding region spans 30–49 (TTAKLASEVGVSEAALYRHF).

It belongs to the nucleoid occlusion factor SlmA family. As to quaternary structure, homodimer. Interacts with FtsZ.

Its subcellular location is the cytoplasm. It is found in the nucleoid. Required for nucleoid occlusion (NO) phenomenon, which prevents Z-ring formation and cell division over the nucleoid. Acts as a DNA-associated cell division inhibitor that binds simultaneously chromosomal DNA and FtsZ, and disrupts the assembly of FtsZ polymers. SlmA-DNA-binding sequences (SBS) are dispersed on non-Ter regions of the chromosome, preventing FtsZ polymerization at these regions. In Shewanella oneidensis (strain ATCC 700550 / JCM 31522 / CIP 106686 / LMG 19005 / NCIMB 14063 / MR-1), this protein is Nucleoid occlusion factor SlmA.